The following is a 405-amino-acid chain: Acetylornithine aminotransferase 1 (405 aa).

Pyridoxal 5'-phosphate is bound by residues 103-104 and Phe136; that span reads GA. Arg139 is a binding site for N(2)-acetyl-L-ornithine. 221–224 provides a ligand contact to pyridoxal 5'-phosphate; it reads DEVQ. N6-(pyridoxal phosphate)lysine is present on Lys250. A N(2)-acetyl-L-ornithine-binding site is contributed by Ser278. A pyridoxal 5'-phosphate-binding site is contributed by Thr279.

Belongs to the class-III pyridoxal-phosphate-dependent aminotransferase family. ArgD subfamily. Homodimer. Requires pyridoxal 5'-phosphate as cofactor.

It localises to the cytoplasm. It catalyses the reaction N(2)-acetyl-L-ornithine + 2-oxoglutarate = N-acetyl-L-glutamate 5-semialdehyde + L-glutamate. Its pathway is amino-acid biosynthesis; L-arginine biosynthesis; N(2)-acetyl-L-ornithine from L-glutamate: step 4/4. This is Acetylornithine aminotransferase 1 from Bradyrhizobium diazoefficiens (strain JCM 10833 / BCRC 13528 / IAM 13628 / NBRC 14792 / USDA 110).